Reading from the N-terminus, the 238-residue chain is MRPNARAINQPRPIKITRHYTKHAEGSVLVEFGETKVICTATVEDSVPRFLKGQGKGWVTAEYGMLPRSTHSRMQREAAKGKQGGRTMEIQRLIARSLRAMVDLEALGERAITLDCDVIQADGGTRTASITGACVALIDAINFLLKNGTLTTNPIKGLVAAISVGIVNGETVCDLEYVEDSIAETDMNVVMMEDGRMIEVQGTAEGEPFSHAELLTLLDLAKQGCEQLFVAQRVALAE.

Residues R86 and 124 to 126 contribute to the phosphate site; that span reads GTR.

This sequence belongs to the RNase PH family. Homohexameric ring arranged as a trimer of dimers.

The catalysed reaction is tRNA(n+1) + phosphate = tRNA(n) + a ribonucleoside 5'-diphosphate. In terms of biological role, phosphorolytic 3'-5' exoribonuclease that plays an important role in tRNA 3'-end maturation. Removes nucleotide residues following the 3'-CCA terminus of tRNAs; can also add nucleotides to the ends of RNA molecules by using nucleoside diphosphates as substrates, but this may not be physiologically important. Probably plays a role in initiation of 16S rRNA degradation (leading to ribosome degradation) during starvation. This chain is Ribonuclease PH, found in Histophilus somni (strain 129Pt) (Haemophilus somnus).